The chain runs to 242 residues: MTTPEPQAAFKRVMLKISGEALMGDQGFGLHPPTVERVAREVQSVHALGVEICMVIGGGNIFRGLQGSAQGMERTTADYMGMLATVMNALAMQSALEGLGIHTRVISAITMNEVAEPYIRRRAVRHLEKKRVCIFAAGTGNPYFTTDTAATLRANEMSCEAIFKGTKVDGVYDKDPAKFADAKRYDTVTYDDVLAKRLGVMDASAIALARDNNLPIIVFSLDEPGGFRGILAGEGTYTRVQD.

16-19 (KISG) contributes to the ATP binding site. The interval 24–29 (GDQGFG) is involved in allosteric activation by GTP. Gly58 contributes to the UMP binding site. The ATP site is built by Gly59 and Arg63. UMP-binding positions include Asp78 and 139–146 (TGNPYFTT). ATP contacts are provided by Thr166, Tyr172, and Asp175.

This sequence belongs to the UMP kinase family. As to quaternary structure, homohexamer.

Its subcellular location is the cytoplasm. The catalysed reaction is UMP + ATP = UDP + ADP. It participates in pyrimidine metabolism; CTP biosynthesis via de novo pathway; UDP from UMP (UMPK route): step 1/1. With respect to regulation, allosterically activated by GTP. Inhibited by UTP. Its function is as follows. Catalyzes the reversible phosphorylation of UMP to UDP. The polypeptide is Uridylate kinase (Roseobacter denitrificans (strain ATCC 33942 / OCh 114) (Erythrobacter sp. (strain OCh 114))).